The chain runs to 740 residues: Protein SMY2 (740 aa).

Phosphoserine is present on residues serine 12 and serine 96. Position 129 is a phosphothreonine (threonine 129). The GYF domain maps to 205–261 (ESSWRYIDTQGQIHGPFTTQMMSQWYIGGYFASTLQISRLGSTPETLGINDIFITLG). Threonine 311 carries the post-translational modification Phosphothreonine. Disordered regions lie at residues 346 to 510 (ISQT…KEEL), 523 to 548 (PSNQTIDIKSQFQKSPKGMKESSPLK), and 567 to 592 (QSSSKQVKSTSSASTTTSSWTTVTSK). Over residues 364–439 (EKGKKEKSES…KKSEKTKKDT (76 aa)) the composition is skewed to basic and acidic residues. Residues 369-440 (EKSESVAKAL…KSEKTKKDTQ (72 aa)) are a coiled coil. Positions 452–467 (LPSLNSSSANPAPWAS) are enriched in low complexity. The segment covering 474 to 486 (AIETSIKNGVSST) has biased composition (polar residues). The span at 500–510 (NSKEEKQKEEL) shows a compositional bias: basic and acidic residues. Polar residues predominate over residues 523–536 (PSNQTIDIKSQFQK). Serine 545 carries the post-translational modification Phosphoserine. Serine 602 is modified (phosphoserine).

Belongs to the SMY2/mpd2 family. As to quaternary structure, interacts with EAP1 and MSL5 (via the GYP domain).

Its subcellular location is the cytoplasm. In terms of biological role, suppressor of the MYO2 gene. The protein is Protein SMY2 (SMY2) of Saccharomyces cerevisiae (strain ATCC 204508 / S288c) (Baker's yeast).